The following is a 334-amino-acid chain: Ornithine carbamoyltransferase (334 aa).

Carbamoyl phosphate is bound by residues 57–60 (STRT), Gln84, Arg108, and 135–138 (HPTQ). L-ornithine is bound by residues Asn168, Asp233, and 237–238 (SM). Residues 275–276 (CL) and Arg320 each bind carbamoyl phosphate.

It belongs to the aspartate/ornithine carbamoyltransferase superfamily. OTCase family.

It is found in the cytoplasm. The catalysed reaction is carbamoyl phosphate + L-ornithine = L-citrulline + phosphate + H(+). The protein operates within amino-acid biosynthesis; L-arginine biosynthesis; L-arginine from L-ornithine and carbamoyl phosphate: step 1/3. In terms of biological role, reversibly catalyzes the transfer of the carbamoyl group from carbamoyl phosphate (CP) to the N(epsilon) atom of ornithine (ORN) to produce L-citrulline. This chain is Ornithine carbamoyltransferase, found in Thermobifida fusca (strain YX).